A 965-amino-acid chain; its full sequence is Sarcosine oxidase subunit alpha (965 aa).

Positions 139, 158, 159, 160, 166, 205, 418, 423, and 425 each coordinate NAD(+). T692 and E784 together coordinate (6R)-5,10-methylene-5,6,7,8-tetrahydrofolate.

Belongs to the GcvT family. Heterotetramer composed of subunits alpha (SoxA), beta (SoxB), gamma (SoxG) and delta (SoxD). Requires NAD(+) as cofactor.

Its subcellular location is the cytoplasm. The enzyme catalyses sarcosine + (6S)-5,6,7,8-tetrahydrofolate + O2 = (6R)-5,10-methylene-5,6,7,8-tetrahydrofolate + glycine + H2O2. The catalysed reaction is sarcosine + O2 + H2O = formaldehyde + glycine + H2O2. Its activity is regulated as follows. Inhibited by Zn(2+), Cu(2+), Cd(2+), Hg(2+), Ag(+), p-chloromercuribenzoate (p-CMB), iodoacetamide, N-ethylmaleimide, CN(-), o-phenanthroline and sodium lauryl sulfate. In the presence of tetrahydrofolate, catalyzes the oxidative demethylation of sarcosine to yield glycine, 5,10-methylenetetrahydrofolate and hydrogen peroxide. In the absence of tetrahydrofolate, catalyzes the oxidative demethylation of sarcosine to yield glycine, formaldehyde and hydrogen peroxide. Can also use N-methyl-L-alanine and N-ethyl-L-glycine. Is very specific for oxygen as an acceptor. This chain is Sarcosine oxidase subunit alpha, found in Corynebacterium sp. (strain U-96).